Consider the following 311-residue polypeptide: uncharacterized protein (311 aa).

Helical transmembrane passes span 11–31 (LDNW…GYLS), 34–54 (VGIV…FLSL), 72–92 (LAIS…LFGI), 101–121 (HVIV…FVAQ), 147–167 (IEGI…WYLM), 198–218 (WFGV…FALS), 233–253 (GFIA…SIVI), 257–277 (FALA…TYLL), and 279–299 (TIPF…NVGP).

It is found in the cell membrane. This is an uncharacterized protein from Mycoplasma pneumoniae (strain ATCC 29342 / M129 / Subtype 1) (Mycoplasmoides pneumoniae).